Consider the following 67-residue polypeptide: U-myrmeciitoxin(01)-Mg4a (67 aa).

The first 25 residues, 1 to 25 (MGKVFFFVLMIAIIGSTFLIEEALG), serve as a signal peptide directing secretion.

This sequence belongs to the ant myrmeciitoxin-01 family. Homodimer; disulfide-linked. In terms of processing, contains 2 intrachain disulfide bonds (one per chain) and 1 interchain disulfide bond. In terms of tissue distribution, expressed by the venom gland.

Its subcellular location is the secreted. This chain is U-myrmeciitoxin(01)-Mg4a, found in Myrmecia gulosa (Red bulldog ant).